A 144-amino-acid polypeptide reads, in one-letter code: Group IID secretory phospholipase A2 (144 aa).

The first 19 residues, 1–19, serve as a signal peptide directing secretion; that stretch reads MRLALLCGLLLAGITATQG. 7 disulfides stabilise this stretch: Cys-45-Cys-137, Cys-47-Cys-63, Cys-62-Cys-117, Cys-68-Cys-144, Cys-69-Cys-110, Cys-78-Cys-103, and Cys-96-Cys-108. Ca(2+) contacts are provided by His-46, Gly-48, and Gly-50. His-66 is an active-site residue. Asp-67 contributes to the Ca(2+) binding site. A glycan (N-linked (GlcNAc...) asparagine) is linked at Asn-99. Residue Asp-111 is part of the active site.

This sequence belongs to the phospholipase A2 family. Requires Ca(2+) as cofactor. In terms of tissue distribution, highly expressed in secondary lymphoid tissues, spleen and lymph nodes. Expressed at a lesser extent in thymus. Expressed in CD4-positive, IL2RA/CD25-positive, FOXP3-positive Tregs (at protein level). Expressed in myeloid cell subsets resident in spleen and lymph nodes, ITGAX/CD11C-positive dendritic cells and macrophages (at protein level). Enriched in CD4-positive, ITGAM/CD11B-positive dendritic cell subset. Expressed in pulmonary ITGAX/CD11C-positive dendritic cell subset (at protein level).

The protein resides in the secreted. Its subcellular location is the cell membrane. It is found in the cytoplasm. It catalyses the reaction a 1,2-diacyl-sn-glycero-3-phosphoethanolamine + H2O = a 1-acyl-sn-glycero-3-phosphoethanolamine + a fatty acid + H(+). The enzyme catalyses 1-hexadecanoyl-2-(9Z-octadecenoyl)-sn-glycero-3-phosphoethanolamine + H2O = 1-hexadecanoyl-sn-glycero-3-phosphoethanolamine + (9Z)-octadecenoate + H(+). The catalysed reaction is 1-hexadecanoyl-2-(9Z,12Z-octadecadienoyl)-sn-glycero-3-phosphoethanolamine + H2O = 1-hexadecanoyl-sn-glycero-3-phosphoethanolamine + (9Z,12Z)-octadecadienoate + H(+). It carries out the reaction 1,2-dihexadecanoyl-sn-glycero-3-phospho-(1'-sn-glycerol) + H2O = 1-hexadecanoyl-sn-glycero-3-phospho-(1'-sn-glycerol) + hexadecanoate + H(+). It catalyses the reaction 1-hexadecanoyl-2-(9Z-octadecenoyl)-sn-glycero-3-phospho-(1'-sn-glycerol) + H2O = 1-hexadecanoyl-sn-glycero-3-phospho-(1'-sn-glycerol) + (9Z)-octadecenoate + H(+). The enzyme catalyses a 1,2-diacyl-sn-glycero-3-phosphocholine + H2O = a 1-acyl-sn-glycero-3-phosphocholine + a fatty acid + H(+). The catalysed reaction is 1,2-dihexadecanoyl-sn-glycero-3-phosphocholine + H2O = 1-hexadecanoyl-sn-glycero-3-phosphocholine + hexadecanoate + H(+). It carries out the reaction 1-hexadecanoyl-2-(9Z-octadecenoyl)-sn-glycero-3-phosphocholine + H2O = 1-hexadecanoyl-sn-glycero-3-phosphocholine + (9Z)-octadecenoate + H(+). It catalyses the reaction 1-hexadecanoyl-2-(9Z,12Z-octadecadienoyl)-sn-glycero-3-phosphocholine + H2O = (9Z,12Z)-octadecadienoate + 1-hexadecanoyl-sn-glycero-3-phosphocholine + H(+). The enzyme catalyses 1-hexadecanoyl-2-(4Z,7Z,10Z,13Z,16Z,19Z-docosahexaenoyl)-sn-glycero-3-phosphocholine + H2O = (4Z,7Z,10Z,13Z,16Z,19Z)-docosahexaenoate + 1-hexadecanoyl-sn-glycero-3-phosphocholine + H(+). Functionally, secretory calcium-dependent phospholipase A2 that primarily targets extracellular lipids, exerting anti-inflammatory and immunosuppressive functions. Hydrolyzes the ester bond of the fatty acyl group attached at sn-2 position of phospholipids (phospholipase A2 activity) with preference for phosphatidylethanolamines and phosphatidylglycerols over phosphatidylcholines. In draining lymph nodes, selectively hydrolyzes diacyl and alkenyl forms of phosphatidylethanolamines, releasing omega-3 polyunsaturated fatty acids (PUFAs) such as eicosapentaenoate and docosahexaenoate that are precursors of the anti-inflammatory lipid mediators, resolvins. During the resolution phase of acute inflammation drives docosahexaenoate-derived resolvin D1 synthesis, which suppresses dendritic cell activation and T-helper 1 immune response. May act in an autocrine and paracrine manner. Via a mechanism independent of its catalytic activity, promotes differentiation of regulatory T cells (Tregs) and participates in the maintenance of immune tolerance. May contribute to lipid remodeling of cellular membranes and generation of lipid mediators involved in pathogen clearance. Displays bactericidal activity against Gram-positive bacteria by directly hydrolyzing phospholipids of the bacterial membrane. This chain is Group IID secretory phospholipase A2 (Pla2g2d), found in Mus musculus (Mouse).